Here is a 205-residue protein sequence, read N- to C-terminus: Imidazoleglycerol-phosphate dehydratase (205 aa).

A disordered region spans residues 1–27 (MKQASPRAGGAKARRGQVARKTKETDV).

The protein belongs to the imidazoleglycerol-phosphate dehydratase family.

It is found in the cytoplasm. The catalysed reaction is D-erythro-1-(imidazol-4-yl)glycerol 3-phosphate = 3-(imidazol-4-yl)-2-oxopropyl phosphate + H2O. It functions in the pathway amino-acid biosynthesis; L-histidine biosynthesis; L-histidine from 5-phospho-alpha-D-ribose 1-diphosphate: step 6/9. In Anaeromyxobacter sp. (strain Fw109-5), this protein is Imidazoleglycerol-phosphate dehydratase.